The chain runs to 344 residues: Uroporphyrinogen decarboxylase (344 aa).

Substrate is bound by residues 26–30, F45, D75, Y151, S206, and H320; that span reads RQAGR.

It belongs to the uroporphyrinogen decarboxylase family. In terms of assembly, homodimer.

It localises to the cytoplasm. The enzyme catalyses uroporphyrinogen III + 4 H(+) = coproporphyrinogen III + 4 CO2. It participates in porphyrin-containing compound metabolism; protoporphyrin-IX biosynthesis; coproporphyrinogen-III from 5-aminolevulinate: step 4/4. Catalyzes the decarboxylation of four acetate groups of uroporphyrinogen-III to yield coproporphyrinogen-III. The protein is Uroporphyrinogen decarboxylase of Staphylococcus epidermidis (strain ATCC 35984 / DSM 28319 / BCRC 17069 / CCUG 31568 / BM 3577 / RP62A).